Consider the following 364-residue polypeptide: Spermidine/putrescine import ATP-binding protein PotA (364 aa).

An ABC transporter domain is found at 5–235 (LSFKDVSKGF…PVNRFVADFI (231 aa)). 37–44 (GPSGCGKT) contributes to the ATP binding site.

This sequence belongs to the ABC transporter superfamily. Spermidine/putrescine importer (TC 3.A.1.11.1) family. In terms of assembly, the complex is composed of two ATP-binding proteins (PotA), two transmembrane proteins (PotB and PotC) and a solute-binding protein (PotD).

Its subcellular location is the cell membrane. It carries out the reaction ATP + H2O + polyamine-[polyamine-binding protein]Side 1 = ADP + phosphate + polyamineSide 2 + [polyamine-binding protein]Side 1.. Functionally, part of the ABC transporter complex PotABCD involved in spermidine/putrescine import. Responsible for energy coupling to the transport system. The chain is Spermidine/putrescine import ATP-binding protein PotA from Staphylococcus epidermidis (strain ATCC 35984 / DSM 28319 / BCRC 17069 / CCUG 31568 / BM 3577 / RP62A).